Consider the following 94-residue polypeptide: Scorpine (94 aa).

The first 19 residues, 1 to 19 (MNSKLTALIFLGLIAIAYC), serve as a signal peptide directing secretion. The 40-residue stretch at 55-94 (EFQCMANMDMLGNCEKHCQTSGEKGYCHGTKCKCGTPLSY) folds into the BetaSPN-type CS-alpha/beta domain. Disulfide bonds link Cys58-Cys81, Cys68-Cys86, and Cys72-Cys88.

This sequence belongs to the long chain scorpion toxin family. Class 3 subfamily. In terms of tissue distribution, expressed by the venom gland.

Its subcellular location is the secreted. It is found in the target cell membrane. This full-length protein shows antibacterial activity against B.subtilis and K.pneumoniae. Also shows a potent inhibitory effect on the ookinete (ED(50) 0.7 uM) and gamete (ED(50) 10 uM) stages of Plasmodium berghei development. In addition, induces cell membrane disruption, leakage currents and cell death on HEK293 cell line (tested at 25 uM). The chain is Scorpine from Pandinus imperator (Emperor scorpion).